Here is a 360-residue protein sequence, read N- to C-terminus: Phospho-N-acetylmuramoyl-pentapeptide-transferase (360 aa).

Transmembrane regions (helical) follow at residues isoleucine 27–tryptophan 47, proline 72–tyrosine 92, serine 94–isoleucine 114, tryptophan 132–glycine 152, isoleucine 168–serine 188, glycine 199–threonine 219, phenylalanine 235–tryptophan 255, valine 263–leucine 283, phenylalanine 288–valine 308, and valine 338–lysine 358.

This sequence belongs to the glycosyltransferase 4 family. MraY subfamily. Mg(2+) serves as cofactor.

The protein resides in the cell inner membrane. The catalysed reaction is UDP-N-acetyl-alpha-D-muramoyl-L-alanyl-gamma-D-glutamyl-meso-2,6-diaminopimeloyl-D-alanyl-D-alanine + di-trans,octa-cis-undecaprenyl phosphate = di-trans,octa-cis-undecaprenyl diphospho-N-acetyl-alpha-D-muramoyl-L-alanyl-D-glutamyl-meso-2,6-diaminopimeloyl-D-alanyl-D-alanine + UMP. Its pathway is cell wall biogenesis; peptidoglycan biosynthesis. Catalyzes the initial step of the lipid cycle reactions in the biosynthesis of the cell wall peptidoglycan: transfers peptidoglycan precursor phospho-MurNAc-pentapeptide from UDP-MurNAc-pentapeptide onto the lipid carrier undecaprenyl phosphate, yielding undecaprenyl-pyrophosphoryl-MurNAc-pentapeptide, known as lipid I. The polypeptide is Phospho-N-acetylmuramoyl-pentapeptide-transferase (Sodalis glossinidius (strain morsitans)).